We begin with the raw amino-acid sequence, 468 residues long: UDP-N-acetylmuramate--L-alanine ligase (468 aa).

112-118 (GTHGKTT) provides a ligand contact to ATP.

It belongs to the MurCDEF family.

Its subcellular location is the cytoplasm. It catalyses the reaction UDP-N-acetyl-alpha-D-muramate + L-alanine + ATP = UDP-N-acetyl-alpha-D-muramoyl-L-alanine + ADP + phosphate + H(+). The protein operates within cell wall biogenesis; peptidoglycan biosynthesis. Functionally, cell wall formation. This chain is UDP-N-acetylmuramate--L-alanine ligase, found in Bordetella avium (strain 197N).